A 339-amino-acid polypeptide reads, in one-letter code: DNA-directed RNA polymerase subunit alpha (339 aa).

Positions 1–233 (MVREEVAGST…DLFLPFLHAE (233 aa)) are alpha N-terminal domain (alpha-NTD). The segment at 264–339 (KKGIPLNCIF…IDLLKNKLSF (76 aa)) is alpha C-terminal domain (alpha-CTD).

The protein belongs to the RNA polymerase alpha chain family. In terms of assembly, in plastids the minimal PEP RNA polymerase catalytic core is composed of four subunits: alpha, beta, beta', and beta''. When a (nuclear-encoded) sigma factor is associated with the core the holoenzyme is formed, which can initiate transcription.

It localises to the plastid. It is found in the chloroplast. It catalyses the reaction RNA(n) + a ribonucleoside 5'-triphosphate = RNA(n+1) + diphosphate. In terms of biological role, DNA-dependent RNA polymerase catalyzes the transcription of DNA into RNA using the four ribonucleoside triphosphates as substrates. In Secale strictum (Mountain rye), this protein is DNA-directed RNA polymerase subunit alpha.